A 192-amino-acid chain; its full sequence is Protein MTH_857 (192 aa).

The region spanning 9-192 (DEGRTLVKIA…FQAQIFHEDG (184 aa)) is the AMMECR1 domain.

The protein is Protein MTH_857 of Methanothermobacter thermautotrophicus (strain ATCC 29096 / DSM 1053 / JCM 10044 / NBRC 100330 / Delta H) (Methanobacterium thermoautotrophicum).